The primary structure comprises 92 residues: Antifungal protein B (92 aa).

A signal peptide spans 1–18 (MHITSIAIVFFAAMGAVA). Positions 19 to 34 (SPIATESDDLDARDVQ) are excised as a propeptide. 3 disulfides stabilise this stretch: Cys42–Cys70, Cys49–Cys77, and Cys62–Cys88.

The protein belongs to the antifungal protein pafB family.

The protein resides in the secreted. It localises to the host cytoplasm. Its function is as follows. Antifungal protein that acts as an inhibitor of growth of human pathogenic molds and yeasts. This chain is Antifungal protein B, found in Penicillium rubens (strain ATCC 28089 / DSM 1075 / NRRL 1951 / Wisconsin 54-1255) (Penicillium chrysogenum).